Reading from the N-terminus, the 418-residue chain is MSLVSNSIALIERGANEILKFDELERRLRSGRPLRIKAGFDPTSPDLHLGHTVLLNKMRQFQDLGHQVVFLIGDFTGMIGDPTGKNVTRKPLSREDVLANASTYEDQVFKVLDRTLTEVRFNSEWFEKMSAVDMIKLAAQHTVARMLERDDFAKRFASQQPIVIHEFLYPLIQGYDSIALRADVELGGTDQKFNLLMGRALQEHHGQPPQIVLTMPLLEGLDGVAKMSKSLGNYIGIKEPPIDIVTKTMKIGDDLMWRWIELLSFKISAAEAVALREAVAKSELNPREVKLRLAHELVSRFYDNAAAEKAIAGWQAVVTGQGNNNLLPLQKINVPADGVRLVALLTKSGLAPSNSEAMRKLKERAVRVDGIVVDDAHLHFVPGFEGLIQIGKRNFIKVRLVTSSESQEFPESNRIDKS.

Residues P42–H51 carry the 'HIGH' region motif. The 'KMSKS' region signature appears at K226–S230. K229 is an ATP binding site. An S4 RNA-binding domain is found at V339–L400.

Belongs to the class-I aminoacyl-tRNA synthetase family. TyrS type 2 subfamily. In terms of assembly, homodimer.

Its subcellular location is the cytoplasm. It catalyses the reaction tRNA(Tyr) + L-tyrosine + ATP = L-tyrosyl-tRNA(Tyr) + AMP + diphosphate + H(+). Functionally, catalyzes the attachment of tyrosine to tRNA(Tyr) in a two-step reaction: tyrosine is first activated by ATP to form Tyr-AMP and then transferred to the acceptor end of tRNA(Tyr). This chain is Tyrosine--tRNA ligase, found in Xylella fastidiosa (strain Temecula1 / ATCC 700964).